The following is a 931-amino-acid chain: Isoleucine--tRNA ligase (931 aa).

Positions 57–67 (PFANGNIHMGH) match the 'HIGH' region motif. Residue Glu556 coordinates L-isoleucyl-5'-AMP. The 'KMSKS' region signature appears at 597-601 (KMSKS). An ATP-binding site is contributed by Lys600. Residues Cys890, Cys893, Cys910, and Cys913 each coordinate Zn(2+).

Belongs to the class-I aminoacyl-tRNA synthetase family. IleS type 1 subfamily. Monomer. Zn(2+) is required as a cofactor.

The protein localises to the cytoplasm. The enzyme catalyses tRNA(Ile) + L-isoleucine + ATP = L-isoleucyl-tRNA(Ile) + AMP + diphosphate. Functionally, catalyzes the attachment of isoleucine to tRNA(Ile). As IleRS can inadvertently accommodate and process structurally similar amino acids such as valine, to avoid such errors it has two additional distinct tRNA(Ile)-dependent editing activities. One activity is designated as 'pretransfer' editing and involves the hydrolysis of activated Val-AMP. The other activity is designated 'posttransfer' editing and involves deacylation of mischarged Val-tRNA(Ile). In Lactobacillus delbrueckii subsp. bulgaricus (strain ATCC BAA-365 / Lb-18), this protein is Isoleucine--tRNA ligase.